The following is a 436-amino-acid chain: Prenyltransferase nscD (436 aa).

Belongs to the tryptophan dimethylallyltransferase family.

It functions in the pathway secondary metabolite biosynthesis. In terms of biological role, prenyltransferase; part of the gene cluster that mediates the biosynthesis of neosartoricin B, a prenylated anthracenone that probably exhibits T-cell antiproliferative activity, suggestive of a physiological role as an immunosuppressive agent. The non-reducing polyketide synthase nscA probably synthesizes and cyclizes the decaketide backbone. The hydrolase nscB then mediates the product release through hydrolysis followed by spontaneous decarboxylation. The prenyltransferase nscD catalyzes the addition of the dimethylallyl group to the aromatic C5. The FAD-dependent monooxygenase nscC is then responsible for the stereospecific hydroxylation at C2. Neosartoricin B can be converted into two additional compounds neosartoricins C and D. Neosartoricin C is a spirocyclic compound that is cyclized through the attack of C3 hydroxyl on C14, followed by dehydration. On the other hand, neosartoricin D is a further cyclized compound in which attack of C2 on C14 in neosartoricin C results in the formation of the acetal-containing dioxabicyclo-octanone ring. Both of these compounds are novel and possibly represent related metabolites of the gene cluster. The polypeptide is Prenyltransferase nscD (Arthroderma gypseum (strain ATCC MYA-4604 / CBS 118893) (Microsporum gypseum)).